Here is a 664-residue protein sequence, read N- to C-terminus: Protein LYK5 (664 aa).

Positions 1-26 (MAACTLHALSVTLFLLLFFAVSPAKA) are cleaved as a signal peptide. The Extracellular portion of the chain corresponds to 27 to 277 (QQPYVNNHQL…DPPGSSSSHK (251 aa)). Asparagine 45, asparagine 81, asparagine 111, asparagine 125, and asparagine 129 each carry an N-linked (GlcNAc...) asparagine glycan. Disulfide bonds link cysteine 52–cysteine 114, cysteine 58–cysteine 181, and cysteine 112–cysteine 179. 135 to 141 (GDETYFS) provides a ligand contact to chitin. N-linked (GlcNAc...) asparagine glycosylation occurs at asparagine 144. 164 to 170 (ERQLTPG) is a binding site for chitin. The 44-residue stretch at 195–238 (LTYLVAMGDSISGIAEMFNSTSAAITEGNELTSDNIFFFTPVLV) folds into the LysM domain. The N-linked (GlcNAc...) asparagine glycan is linked to asparagine 213. Positions 251–269 (PSPPPPPVVATPPQTPVDP) are enriched in pro residues. Residues 251–270 (PSPPPPPVVATPPQTPVDPP) form a disordered region. The helical transmembrane segment at 278–298 (WIYIGIGIGAGLLLLLSILAL) threads the bilayer. Residues 299 to 664 (CFYKRRSKKK…DLLRSGSLGN (366 aa)) are Cytoplasmic-facing. The Protein kinase domain maps to 351–643 (KSAIESLTLY…TQVLTTLSMI (293 aa)). ATP is bound by residues 357–365 (LTLYRFNDL) and lysine 395.

The protein belongs to the protein kinase superfamily. Ser/Thr protein kinase family.

It localises to the cell membrane. Its function is as follows. May recognize microbe-derived N-acetylglucosamine (NAG)-containing ligands. The sequence is that of Protein LYK5 (LYK5) from Arabidopsis thaliana (Mouse-ear cress).